A 799-amino-acid polypeptide reads, in one-letter code: Protein phosphatase 1 regulatory subunit 3F (799 aa).

Residues 1–30 (MARTAPVEPPLRHPAPPSPAAGEPRASAEA) are disordered. Residues 1 to 772 (MARTAPVEPP…LTQTLGVLAG (772 aa)) lie on the Cytoplasmic side of the membrane. Residues 7–19 (VEPPLRHPAPPSP) are compositionally biased toward pro residues. Ser18 carries the phosphoserine modification. A compositionally biased stretch (low complexity) spans 20–30 (AAGEPRASAEA). Positions 36 to 39 (RVLF) match the PP1-binding motif motif. 4 disordered regions span residues 53–108 (RYRP…PVPA), 201–235 (SPPGAGVGGTGAGDPLLDPGLGLGPGQMSASSPDD), 332–353 (RRRPFEEEPRMRSADDNTLAEH), and 417–439 (ATCGLGGPPRDQASGPDASDRAA). Acidic residues predominate over residues 78–97 (ADEEDDGEDGDEGEEEEEAF). The CBM21 domain maps to 127–283 (LERLGRVMVE…NNHGRNYTVL (157 aa)). Positions 334 to 353 (RPFEEEPRMRSADDNTLAEH) are enriched in basic and acidic residues. Position 545 is a phosphoserine (Ser545). Disordered regions lie at residues 566-600 (KDTEDPDDEGEGEDGLSITPSSPEGGSPKESPPEI), 663-688 (SKSPGEAGTESQMEELPTERESSWVP), and 722-743 (PHVNSQEEEGGSLNLESPKRSP). Positions 569 to 579 (EDPDDEGEGED) are enriched in acidic residues. Residues 585–594 (PSSPEGGSPK) are compositionally biased toward low complexity. Phosphoserine is present on residues Ser587 and Ser592. Basic and acidic residues predominate over residues 679 to 688 (PTERESSWVP). A helical membrane pass occupies residues 773 to 793 (LVMVPVALNSGVSLLVLVLCL). The Extracellular segment spans residues 794–799 (SLAWFS).

Highly expressed in brain (at protein level).

It is found in the membrane. Glycogen-targeting subunit for protein phosphatase 1 (PP1). The sequence is that of Protein phosphatase 1 regulatory subunit 3F (Ppp1r3f) from Mus musculus (Mouse).